The primary structure comprises 188 residues: Probable manganese efflux pump MntP (188 aa).

The next 5 membrane-spanning stretches (helical) occupy residues 3–23 (ITAT…ASIG), 66–86 (LEWN…RMII), 106–128 (WLLV…GLAF), 143–163 (ATLI…SIIG), and 168–188 (ILGG…HFHG).

Belongs to the MntP (TC 9.B.29) family.

It localises to the cell inner membrane. Probably functions as a manganese efflux pump. This chain is Probable manganese efflux pump MntP, found in Escherichia coli O7:K1 (strain IAI39 / ExPEC).